The sequence spans 121 residues: Large ribosomal subunit protein bL12 (121 aa).

It belongs to the bacterial ribosomal protein bL12 family. As to quaternary structure, homodimer. Part of the ribosomal stalk of the 50S ribosomal subunit. Forms a multimeric L10(L12)X complex, where L10 forms an elongated spine to which 2 to 4 L12 dimers bind in a sequential fashion. Binds GTP-bound translation factors.

In terms of biological role, forms part of the ribosomal stalk which helps the ribosome interact with GTP-bound translation factors. Is thus essential for accurate translation. The sequence is that of Large ribosomal subunit protein bL12 from Clostridium beijerinckii (strain ATCC 51743 / NCIMB 8052) (Clostridium acetobutylicum).